The chain runs to 243 residues: UPF0758 protein Ava_0172 (243 aa).

In terms of domain architecture, MPN spans 113–235; it reads PIDSPVAAVA…HQSLREVTTL (123 aa). His-184, His-186, and Asp-197 together coordinate Zn(2+). The JAMM motif signature appears at 184 to 197; the sequence is HNHPSGNVEPSPED.

Belongs to the UPF0758 family.

This chain is UPF0758 protein Ava_0172, found in Trichormus variabilis (strain ATCC 29413 / PCC 7937) (Anabaena variabilis).